The primary structure comprises 640 residues: Rab proteins geranylgeranyltransferase component A (640 aa).

2 disordered regions span residues 414–439 and 594–640; these read DILG…NNNN and HNEN…EMEL. Residues 419-439 are compositionally biased toward low complexity; sequence NNNNNNNNNNNNNNNNNNNNN. Acidic residues predominate over residues 604–624; that stretch reads IDSDEDEDEDINDMNDNEEED.

The protein belongs to the Rab GDI family.

Functionally, substrate-binding subunit (component A) of the Rab geranylgeranyltransferase (GGTase) complex. Binds unprenylated Rab proteins and presents the substrate peptide to the catalytic component B. The component A is thought to be regenerated by transferring its prenylated Rab back to the donor membrane. This Candida albicans (Yeast) protein is Rab proteins geranylgeranyltransferase component A (MRS6).